The primary structure comprises 158 residues: NAD(P)H-quinone oxidoreductase subunit J, chloroplastic (158 aa).

The protein belongs to the complex I 30 kDa subunit family. In terms of assembly, NDH is composed of at least 16 different subunits, 5 of which are encoded in the nucleus.

It is found in the plastid. The protein resides in the chloroplast thylakoid membrane. The enzyme catalyses a plastoquinone + NADH + (n+1) H(+)(in) = a plastoquinol + NAD(+) + n H(+)(out). It carries out the reaction a plastoquinone + NADPH + (n+1) H(+)(in) = a plastoquinol + NADP(+) + n H(+)(out). Functionally, NDH shuttles electrons from NAD(P)H:plastoquinone, via FMN and iron-sulfur (Fe-S) centers, to quinones in the photosynthetic chain and possibly in a chloroplast respiratory chain. The immediate electron acceptor for the enzyme in this species is believed to be plastoquinone. Couples the redox reaction to proton translocation, and thus conserves the redox energy in a proton gradient. The chain is NAD(P)H-quinone oxidoreductase subunit J, chloroplastic from Jasminum nudiflorum (Winter jasmine).